The chain runs to 564 residues: Kelch repeat and BTB domain-containing protein 1 (564 aa).

One can recognise a BTB domain in the interval 21–88 (CDINIVINDE…IYGIPLSLTN (68 aa)). The region spanning 123-219 (CIDFYIYADK…SLLSPQVIKS (97 aa)) is the BACK domain. 6 Kelch repeats span residues 252–297 (IELI…VLDN), 298–346 (IIYM…ADDE), 347–395 (YIYC…MLNG), 397–441 (IYVI…VHDG), 442–492 (KIYI…SAHN), and 494–539 (LYVG…CEPI).

In terms of assembly, interacts (via BTB domain) with host CUL3.

It is found in the host cytoplasm. In terms of biological role, probable substrate-specific adapter of CUL3-containing E3 ubiquitin-protein ligases which mediate the ubiquitination and subsequent proteasomal degradation of host target proteins. The sequence is that of Kelch repeat and BTB domain-containing protein 1 (KBTB1) from Cowpox virus (strain GRI-90 / Grishak) (CPV).